The sequence spans 821 residues: Phenylalanine--tRNA ligase beta subunit (821 aa).

Residues 39-149 (RTWAEGVVVG…DAVTVGEDVR (111 aa)) form the tRNA-binding domain. The B5 domain occupies 409–503 (PLERTLTLRL…RLYGYDRFEE (95 aa)). 4 residues coordinate Mg(2+): D481, D487, E490, and E491. Residues 724-820 (STYPASDRDL…LVEKYAVTLR (97 aa)) form the FDX-ACB domain.

It belongs to the phenylalanyl-tRNA synthetase beta subunit family. Type 1 subfamily. As to quaternary structure, tetramer of two alpha and two beta subunits. It depends on Mg(2+) as a cofactor.

Its subcellular location is the cytoplasm. It carries out the reaction tRNA(Phe) + L-phenylalanine + ATP = L-phenylalanyl-tRNA(Phe) + AMP + diphosphate + H(+). The polypeptide is Phenylalanine--tRNA ligase beta subunit (Thermosynechococcus vestitus (strain NIES-2133 / IAM M-273 / BP-1)).